Reading from the N-terminus, the 1894-residue chain is Plexin-A2 (1894 aa).

Positions 1–34 are cleaved as a signal peptide; it reads MEQRRPWPRALEVDSRSVVLLSVVWVLLAPPAAG. The region spanning 35-508 is the Sema domain; that stretch reads MPQFSTFHSE…SERQVTRVPV (474 aa). The Extracellular portion of the chain corresponds to 35–1237; it reads MPQFSTFHSE…VISDSLLTLP (1203 aa). Residues asparagine 76 and asparagine 91 are each glycosylated (N-linked (GlcNAc...) asparagine). 10 cysteine pairs are disulfide-bonded: cysteine 94-cysteine 103, cysteine 129-cysteine 137, cysteine 284-cysteine 405, cysteine 300-cysteine 356, cysteine 374-cysteine 393, cysteine 511-cysteine 528, cysteine 517-cysteine 559, cysteine 520-cysteine 537, cysteine 531-cysteine 543, and cysteine 594-cysteine 613. A glycan (N-linked (GlcNAc...) asparagine) is linked at asparagine 327. N-linked (GlcNAc...) asparagine glycans are attached at residues asparagine 598, asparagine 696, and asparagine 756. IPT/TIG domains lie at 858 to 951, 954 to 1037, 1041 to 1139, and 1143 to 1228; these read PQIT…QYTF, PSVL…QFEY, PRVQ…KFIY, and PTFE…SVSV. N-linked (GlcNAc...) asparagine glycosylation is present at asparagine 1205. The helical transmembrane segment at 1238-1258 threads the bilayer; the sequence is AIVSIAAGGSLLLIIVIIVLI. The Cytoplasmic portion of the chain corresponds to 1259-1894; that stretch reads AYKRKSREND…QLINAMSIES (636 aa). Residues 1261–1310 adopt a coiled-coil conformation; it reads KRKSRENDLTLKRLQMQMDNLESRVALECKEAFAELQTDINELTSDLDRS. Serine 1612 carries the post-translational modification Phosphoserine.

This sequence belongs to the plexin family. As to quaternary structure, homodimer. The PLXNA2 homodimer interacts with a SEMA6A homodimer, giving rise to a heterotetramer. Interacts directly with NRP1 and NRP2. Interacts with RND1. In terms of tissue distribution, detected in fetal brain.

Its subcellular location is the cell membrane. Its function is as follows. Coreceptor for SEMA3A and SEMA6A. Necessary for signaling by SEMA6A and class 3 semaphorins and subsequent remodeling of the cytoskeleton. Plays a role in axon guidance, invasive growth and cell migration. Class 3 semaphorins bind to a complex composed of a neuropilin and a plexin. The plexin modulates the affinity of the complex for specific semaphorins, and its cytoplasmic domain is required for the activation of down-stream signaling events in the cytoplasm. This Homo sapiens (Human) protein is Plexin-A2 (PLXNA2).